The following is an 82-amino-acid chain: U-actitoxin-Oulsp2 (82 aa).

An N-terminal signal peptide occupies residues 1-21; it reads MNTKLVVVFLLSAILFVSVTA. Positions 22 to 46 are excised as a propeptide; that stretch reads SRPGKDLERDEAYETYDDERPYFKR. In terms of domain architecture, ShKT spans 48–82; it reads CKDNLPAATCSNVKANNNCSSEKYKTNCAKTCGEC. Disulfide bonds link Cys-48-Cys-82, Cys-57-Cys-75, and Cys-66-Cys-79. Residues 70–71 form a theoritically crucial for binding to potassium channels region; sequence KY.

The protein belongs to the sea anemone type 1 potassium channel toxin family. Type 1b subfamily.

Its subcellular location is the secreted. The protein localises to the nematocyst. Functionally, probable toxin with unknown function. In contrast to similar toxins, this toxin does not inhibit voltage-gated potassium channels (tested at 100 nM). Does not show antimicrobial activities against bacteria and yeasts. The chain is U-actitoxin-Oulsp2 from Oulactis sp. (Sea anemone).